A 448-amino-acid polypeptide reads, in one-letter code: Ribosomal protein uS12 methylthiotransferase RimO (448 aa).

The MTTase N-terminal domain maps to 16–126 (PRISFVSLGC…VVAAVHEAVP (111 aa)). The [4Fe-4S] cluster site is built by Cys-25, Cys-61, Cys-90, Cys-157, Cys-161, and Cys-164. In terms of domain architecture, Radical SAM core spans 143–380 (LTPRHYAYLK…MEAQSHVSLR (238 aa)). One can recognise a TRAM domain in the interval 383–448 (RAKVGKRLSV…DAYDLHGIAV (66 aa)).

The protein belongs to the methylthiotransferase family. RimO subfamily. [4Fe-4S] cluster is required as a cofactor.

It localises to the cytoplasm. The catalysed reaction is L-aspartate(89)-[ribosomal protein uS12]-hydrogen + (sulfur carrier)-SH + AH2 + 2 S-adenosyl-L-methionine = 3-methylsulfanyl-L-aspartate(89)-[ribosomal protein uS12]-hydrogen + (sulfur carrier)-H + 5'-deoxyadenosine + L-methionine + A + S-adenosyl-L-homocysteine + 2 H(+). Catalyzes the methylthiolation of an aspartic acid residue of ribosomal protein uS12. The polypeptide is Ribosomal protein uS12 methylthiotransferase RimO (Methylorubrum extorquens (strain PA1) (Methylobacterium extorquens)).